A 184-amino-acid chain; its full sequence is Casparian strip membrane protein 3 (184 aa).

Topologically, residues 1–22 (MEGSGEHGETSKGPLSKGVSRG) are cytoplasmic. Residues 23-43 (LCILDLIFRVIAVIGTLASAI) traverse the membrane as a helical segment. The Extracellular segment spans residues 44–72 (AMGTTNQTMPFFTQFVQFKERYSDLPTLT). Asn49 is a glycosylation site (N-linked (GlcNAc...) asparagine). The chain crosses the membrane as a helical span at residues 73-93 (FFVVANSIASAYLIISLPLSI). At 94 to 105 (VHIIRSRAKYSR) the chain is on the cytoplasmic side. Residues 106-126 (LILIFFDVAMLALVTAAASAG) form a helical membrane-spanning segment. At 127–159 (AAIVYLAHNGNVSANWFAICQQFDSFCERISGS) the chain is on the extracellular side. Residue Asn137 is glycosylated (N-linked (GlcNAc...) asparagine). The helical transmembrane segment at 160 to 180 (LIGSFAAMVVLILLILLSAVA) threads the bilayer. Residues 181 to 184 (LARR) lie on the Cytoplasmic side of the membrane.

It belongs to the Casparian strip membrane proteins (CASP) family. As to quaternary structure, homodimer and heterodimers.

It is found in the cell membrane. Its function is as follows. Regulates membrane-cell wall junctions and localized cell wall deposition. Required for establishment of the Casparian strip membrane domain (CSD) and the subsequent formation of Casparian strips, a cell wall modification of the root endodermis that determines an apoplastic barrier between the intraorganismal apoplasm and the extraorganismal apoplasm and prevents lateral diffusion. The sequence is that of Casparian strip membrane protein 3 from Brachypodium distachyon (Purple false brome).